We begin with the raw amino-acid sequence, 300 residues long: Phosphatidylserine decarboxylase proenzyme (300 aa).

Residues Asp-113, His-169, and Ser-256 each act as charge relay system; for autoendoproteolytic cleavage activity in the active site. Ser-256 acts as the Schiff-base intermediate with substrate; via pyruvic acid; for decarboxylase activity in catalysis. Position 256 is a pyruvic acid (Ser); by autocatalysis (Ser-256).

Belongs to the phosphatidylserine decarboxylase family. PSD-B subfamily. Prokaryotic type II sub-subfamily. As to quaternary structure, heterodimer of a large membrane-associated beta subunit and a small pyruvoyl-containing alpha subunit. It depends on pyruvate as a cofactor. In terms of processing, is synthesized initially as an inactive proenzyme. Formation of the active enzyme involves a self-maturation process in which the active site pyruvoyl group is generated from an internal serine residue via an autocatalytic post-translational modification. Two non-identical subunits are generated from the proenzyme in this reaction, and the pyruvate is formed at the N-terminus of the alpha chain, which is derived from the carboxyl end of the proenzyme. The autoendoproteolytic cleavage occurs by a canonical serine protease mechanism, in which the side chain hydroxyl group of the serine supplies its oxygen atom to form the C-terminus of the beta chain, while the remainder of the serine residue undergoes an oxidative deamination to produce ammonia and the pyruvoyl prosthetic group on the alpha chain. During this reaction, the Ser that is part of the protease active site of the proenzyme becomes the pyruvoyl prosthetic group, which constitutes an essential element of the active site of the mature decarboxylase.

The protein localises to the cell membrane. The catalysed reaction is a 1,2-diacyl-sn-glycero-3-phospho-L-serine + H(+) = a 1,2-diacyl-sn-glycero-3-phosphoethanolamine + CO2. It participates in phospholipid metabolism; phosphatidylethanolamine biosynthesis; phosphatidylethanolamine from CDP-diacylglycerol: step 2/2. In terms of biological role, catalyzes the formation of phosphatidylethanolamine (PtdEtn) from phosphatidylserine (PtdSer). This chain is Phosphatidylserine decarboxylase proenzyme, found in Ruminiclostridium cellulolyticum (strain ATCC 35319 / DSM 5812 / JCM 6584 / H10) (Clostridium cellulolyticum).